The following is a 191-amino-acid chain: Polysulfide reductase chain B (191 aa).

4Fe-4S ferredoxin-type domains lie at tyrosine 5–valine 34, glycine 50–aspartate 83, and glycine 84–valine 113. Residues cysteine 14, cysteine 17, cysteine 20, cysteine 24, cysteine 61, cysteine 64, cysteine 69, cysteine 73, cysteine 93, cysteine 96, cysteine 99, cysteine 103, cysteine 120, cysteine 123, cysteine 136, and cysteine 140 each contribute to the [4Fe-4S] cluster site.

In terms of assembly, functional polysulfide reductase is made up of three different (A, B, and C) subunits.

Functionally, component of the phosphorylative electron transport system with polysulfide as the terminal acceptor. The chain is Polysulfide reductase chain B (psrB) from Wolinella succinogenes (strain ATCC 29543 / DSM 1740 / CCUG 13145 / JCM 31913 / LMG 7466 / NCTC 11488 / FDC 602W) (Vibrio succinogenes).